An 880-amino-acid polypeptide reads, in one-letter code: Alanine--tRNA ligase (880 aa).

Residues His566, His570, Cys668, and His672 each contribute to the Zn(2+) site.

Belongs to the class-II aminoacyl-tRNA synthetase family. Requires Zn(2+) as cofactor.

It is found in the cytoplasm. It carries out the reaction tRNA(Ala) + L-alanine + ATP = L-alanyl-tRNA(Ala) + AMP + diphosphate. In terms of biological role, catalyzes the attachment of alanine to tRNA(Ala) in a two-step reaction: alanine is first activated by ATP to form Ala-AMP and then transferred to the acceptor end of tRNA(Ala). Also edits incorrectly charged Ser-tRNA(Ala) and Gly-tRNA(Ala) via its editing domain. This is Alanine--tRNA ligase from Nostoc sp. (strain PCC 7120 / SAG 25.82 / UTEX 2576).